The sequence spans 612 residues: Dihydroxy-acid dehydratase (612 aa).

Aspartate 81 provides a ligand contact to Mg(2+). Cysteine 122 is a binding site for [2Fe-2S] cluster. Mg(2+)-binding residues include aspartate 123 and lysine 124. An N6-carboxylysine modification is found at lysine 124. A [2Fe-2S] cluster-binding site is contributed by cysteine 195. Mg(2+) is bound at residue glutamate 491. Serine 517 functions as the Proton acceptor in the catalytic mechanism.

Belongs to the IlvD/Edd family. Homodimer. It depends on [2Fe-2S] cluster as a cofactor. Mg(2+) is required as a cofactor.

The catalysed reaction is (2R)-2,3-dihydroxy-3-methylbutanoate = 3-methyl-2-oxobutanoate + H2O. It catalyses the reaction (2R,3R)-2,3-dihydroxy-3-methylpentanoate = (S)-3-methyl-2-oxopentanoate + H2O. Its pathway is amino-acid biosynthesis; L-isoleucine biosynthesis; L-isoleucine from 2-oxobutanoate: step 3/4. The protein operates within amino-acid biosynthesis; L-valine biosynthesis; L-valine from pyruvate: step 3/4. Functions in the biosynthesis of branched-chain amino acids. Catalyzes the dehydration of (2R,3R)-2,3-dihydroxy-3-methylpentanoate (2,3-dihydroxy-3-methylvalerate) into 2-oxo-3-methylpentanoate (2-oxo-3-methylvalerate) and of (2R)-2,3-dihydroxy-3-methylbutanoate (2,3-dihydroxyisovalerate) into 2-oxo-3-methylbutanoate (2-oxoisovalerate), the penultimate precursor to L-isoleucine and L-valine, respectively. The chain is Dihydroxy-acid dehydratase from Buchnera aphidicola subsp. Baizongia pistaciae (strain Bp).